The chain runs to 409 residues: Na(+)-translocating NADH-quinone reductase subunit F (409 aa).

Residues phenylalanine 5 to phenylalanine 25 form a helical membrane-spanning segment. One can recognise a 2Fe-2S ferredoxin-type domain in the interval glycine 34 to isoleucine 128. Residues cysteine 71, cysteine 77, cysteine 80, and cysteine 112 each contribute to the [2Fe-2S] cluster site. In terms of domain architecture, FAD-binding FR-type spans valine 131–lysine 271.

It belongs to the NqrF family. In terms of assembly, composed of six subunits; NqrA, NqrB, NqrC, NqrD, NqrE and NqrF. [2Fe-2S] cluster serves as cofactor. It depends on FAD as a cofactor.

It is found in the cell inner membrane. It carries out the reaction a ubiquinone + n Na(+)(in) + NADH + H(+) = a ubiquinol + n Na(+)(out) + NAD(+). In terms of biological role, NQR complex catalyzes the reduction of ubiquinone-1 to ubiquinol by two successive reactions, coupled with the transport of Na(+) ions from the cytoplasm to the periplasm. The first step is catalyzed by NqrF, which accepts electrons from NADH and reduces ubiquinone-1 to ubisemiquinone by a one-electron transfer pathway. The polypeptide is Na(+)-translocating NADH-quinone reductase subunit F (Actinobacillus pleuropneumoniae serotype 5b (strain L20)).